We begin with the raw amino-acid sequence, 437 residues long: Acyl-coenzyme A thioesterase 2, chloroplastic (437 aa).

The transit peptide at 1–13 (MDLSSSPNHPITV) directs the protein to the chloroplast. HotDog ACOT-type domains follow at residues 89-211 (ILYN…RDSK) and 287-404 (RDTR…RPEA).

This sequence belongs to the acyl coenzyme A hydrolase family. As to expression, mostly expressed at low levels in glandular trichomes (lupulin glands), and, to a lower extent, in stems, leaves, flowers and cones.

The protein localises to the plastid. It is found in the chloroplast. Acyl-CoA thioesterases are a group of enzymes that catalyze the hydrolysis of acyl-CoAs to the free fatty acid and coenzyme A (CoASH), providing the potential to regulate intracellular levels of acyl-CoAs, free fatty acids and CoASH. The protein is Acyl-coenzyme A thioesterase 2, chloroplastic of Humulus lupulus (European hop).